A 598-amino-acid polypeptide reads, in one-letter code: MSFSSIVSKFLRYLEIPAKNRTAVNFLRNPDLQPIKSANQTWGFWSNLAYWGAVSFTAGTWMSGSAALSVGLSYPETIVSFLLGNVLTIIFTMANSYPGYDWKIGFTLAQRFVFGIYGSAFGIIIRILMSIVNYGSNAWLGGLSINMILDSWSHHYLHLPNTLSPSVAMTTKQLVGFIIFHVLTALCYFMKPYHMNYLLIWSCVATCFAMLGIVIYLTKNAHGVGELFTSTKSTVTGSKRAWAWVYMISYWFGSISPGSTNQSDYSRFGSSNLAIWTGSVCALLIPATLVPIFGVISASTCDKLYGKQFWMPMDIFDYWLTNNYSAGARAGAFFCGLCFTMSQMSSTISNCGFATGMDMAGLLPKYVDIKRGALFCACISWACLPWNFYNSSSTFLTVMSSFGVVMTPIIAVMICDNFLIRKRQYSITNAFILKGEYYFTKGVNWRAIVAWVCGMAPGLPGIAWEVNNNYFHDSGIVKFFYGDSFFSFLISFFVYWGLCVFFPFKITVRHDDKDYYGAFTDEEARKKGMIPYSEISEEEIRAYTLGECYTTGHEYKPESSDNESPELIKTSSENTNVFEIVHQKDDEKHSFSTTQQVV.

11 helical membrane passes run Leu-48 to Leu-68, Gly-71 to Phe-91, Phe-112 to Val-132, Leu-174 to His-194, Tyr-197 to Leu-217, Ala-241 to Asn-261, Leu-273 to Phe-293, Gly-372 to Ser-392, Phe-395 to Cys-415, Ala-447 to Asn-467, and Ser-484 to Phe-504. Phosphoserine is present on residues Ser-560 and Ser-572.

It belongs to the purine-cytosine permease (2.A.39) family.

The protein localises to the cell membrane. Functionally, high-affinity pH-dependent nicotinamide riboside transporter which also transports thiamine with low affinity. Involved in 5-fluorocytosine sensitivity. The polypeptide is Nicotinamide riboside transporter 1 (NRT1) (Saccharomyces cerevisiae (strain ATCC 204508 / S288c) (Baker's yeast)).